The chain runs to 51 residues: Small polypeptide DEVIL 1 (51 aa).

Residues 1 to 25 (MEMKRVMMSSAERSKEKKRSISRRL) form a disordered region. Residues 16-25 (EKKRSISRRL) show a composition bias toward basic residues. Residues 20 to 51 (SISRRLGKYMKEQKGRIYIIRRCMVMLLCSHD) are required for DVL/RTFL small polypeptide activity. A helical transmembrane segment spans residues 28-44 (YMKEQKGRIYIIRRCMV).

The protein belongs to the DVL/RTFL small polypeptides family. In terms of tissue distribution, mostly expressed in leaves and, to a lower extent, in roots and stems.

The protein resides in the cell membrane. Small polypeptide acting as a regulatory molecule which coordinates cellular responses required for differentiation, growth and development, including leaves shape, pedicule elongation, inflorescence organization and fruit maturation, probably by restricting polar cell proliferation in lateral organs and coordinating socket cell recruitment and differentiation at trichome sites. In Arabidopsis thaliana (Mouse-ear cress), this protein is Small polypeptide DEVIL 1.